The following is a 239-amino-acid chain: Ribonuclease PH (239 aa).

Residues R86 and 124 to 126 (GTR) each bind phosphate.

The protein belongs to the RNase PH family. Homohexameric ring arranged as a trimer of dimers.

The catalysed reaction is tRNA(n+1) + phosphate = tRNA(n) + a ribonucleoside 5'-diphosphate. Its function is as follows. Phosphorolytic 3'-5' exoribonuclease that plays an important role in tRNA 3'-end maturation. Removes nucleotide residues following the 3'-CCA terminus of tRNAs; can also add nucleotides to the ends of RNA molecules by using nucleoside diphosphates as substrates, but this may not be physiologically important. Probably plays a role in initiation of 16S rRNA degradation (leading to ribosome degradation) during starvation. This chain is Ribonuclease PH, found in Rickettsia felis (strain ATCC VR-1525 / URRWXCal2) (Rickettsia azadi).